Consider the following 1098-residue polypeptide: MLNGLTRVSTSSELESILDIVQSSGEIAVVFTSPSIGDLETITSETQRRQLRIAGIPRGGYTILPAIPLYDDELLQMCERYTSANEYEKAEMRNSLYMREYPLFTYSIRHQRALFHPADYVSRILQFCSYYVQAPDADVLPLQDKSPFLHISPIKEICKHLRLIARGTPVAPDDSESPVPEQLRLHAESDAEKLAAERATAMSIATSSGGASETEQPSLFSGVAPSALFQKGAVEEVDKDAEDTMEDLTGEETVDAVHSFQAEYLTLDGFELVTKASIYYDREGEGQRVVAVYIPGGVPEDTCRAAAAVLEPAATKKNLRAPTNGGLPPDTGIVGYYDYLTNPTQHKCRETEYSRRNWGLLAQSEPLLKHLDKLYSQLAPMHHHLQRVAIPSQYQLCGTVFSTITVNRNFRTAVHTDKGDFRSGLGVLSVINGEFEGCHLAIKRLKKAFQLKVGDVLLFDTSLEHGNTEVVNPEIHWQRTSVVCYLRTGLMSSVCEMERRKHLNRLILLQLLNTEVRNTTVNINGADSSLPPLFVPTRLASHLAPVQLAALGFIVERTEKQSGCVVAMTMGLGKTLVALTLCFSQLHLAPQADILILTPKPIISHWVDEKNKWGMHGLHFPHFVASDGLNSLEFEQQLLEYERQRNNEKPKLGHIFVINGEYLAGFLRRFKRFTPLLMIVDEGHRVAAKGNKLTESLDRLRCNLRIVLSGTPLQNDASELYRLVGWVNKGVSRVLPPKRFQELANDINQFVEGDDGAFYNAVMAQEYIQDWMRGFVFREMENDLPPLHDYLLICGSSDVQREYEEKLGLTETAMTALKATEHRPHHLSTHPACYLAFISDSYQSMVSGWTVRAQSNTSRPRVSQLEEIDTMRLEQYVQLVENEQLDAFIDLSGKMRVLVDIVLRVQARKEKLIIFSLYVGSQDLIHRTLTALRVCTFTVRGRDSQDRRRRAMQEFSENKDLIVLVLSTKIAAYGLDFTAANHVVLFDSWWNPQVDAQAIARAYRRNQRKPVTVYRLISATENKFVLRSQTRKIALFKCILHERTSRQALPDELEDCAANEKDEERRIFWAKLKTTSLAGDSRALLNVYRYQESVRESE.

A thymine dioxygenase region spans residues 1–540 (MLNGLTRVST…PPLFVPTRLA (540 aa)). Fe cation is bound by residues histidine 415, aspartate 417, and histidine 465. A 2-oxoglutarate-binding site is contributed by arginine 479. Residues 541–1098 (SHLAPVQLAA…RYQESVRESE (558 aa)) form a DNA Helicase region. Positions 555–730 (VERTEKQSGC…YRLVGWVNKG (176 aa)) constitute a Helicase ATP-binding domain. 568–575 (MTMGLGKT) lines the ATP pocket. A DEAH box motif is present at residues 681–684 (DEGH). In terms of domain architecture, Helicase C-terminal spans 897-1057 (VLVDIVLRVQ…ALPDELEDCA (161 aa)).

In the C-terminal section; belongs to the SNF2/RAD54 helicase family. This sequence in the N-terminal section; belongs to the TET family. JBP2 subfamily. The cofactor is Fe(2+).

The protein localises to the nucleus. The enzyme catalyses ATP + H2O = ADP + phosphate + H(+). It carries out the reaction thymine + 2-oxoglutarate + O2 = 5-hydroxymethyluracil + succinate + CO2. Its function is as follows. Dioxygenase that catalyzes the first step of DNA base J (beta-d-glucosyl-HOMedU) biosynthesis by converting thymine to 5-hydroxymethyluracil (HOMedU). DNA base J is a hypermodified thymidine residue found in the genome of kinetoplastid parasites, which is localized primarily to repetitive DNA, namely the telomeres, and is implicated in the regulation of antigenic variation. Probably also acts as a DNA helicase. Recognizes and binds specific regions of the genome, hydrolyzes ATP and allows the DNA base J de novo synthesis. Involved in initial synthesis of DNA base J, JBP1 being able to act via the basal level of DNA base J and propagate further synthesis. In contrast to JBP1, it does not specifically bind DNA base J, however it binds chromatin. This Leishmania infantum protein is Bifunctional helicase and thymine dioxygenase JBP2 (JBP2).